We begin with the raw amino-acid sequence, 332 residues long: Geranylgeranyl pyrophosphate synthase 2 (332 aa).

Residues Lys-55, Arg-58, and His-87 each contribute to the isopentenyl diphosphate site. Asp-94 and Asp-98 together coordinate Mg(2+). Residue Arg-103 coordinates dimethylallyl diphosphate. Arg-104 contributes to the isopentenyl diphosphate binding site. The dimethylallyl diphosphate site is built by Lys-181, Thr-182, and Gln-218. Asp-221 is a binding site for Mg(2+). Residues Asn-225, Lys-235, and Lys-245 each coordinate dimethylallyl diphosphate.

This sequence belongs to the FPP/GGPP synthase family. Requires Mg(2+) as cofactor.

The catalysed reaction is isopentenyl diphosphate + dimethylallyl diphosphate = (2E)-geranyl diphosphate + diphosphate. It catalyses the reaction isopentenyl diphosphate + (2E)-geranyl diphosphate = (2E,6E)-farnesyl diphosphate + diphosphate. It carries out the reaction isopentenyl diphosphate + (2E,6E)-farnesyl diphosphate = (2E,6E,10E)-geranylgeranyl diphosphate + diphosphate. Its function is as follows. Geranylgeranyl pyrophosphate synthase; part of the gene cluster 3 that mediates the biosynthesis of an isoprenoid secondary metabolite. This is Geranylgeranyl pyrophosphate synthase 2 (GGS2) from Zymoseptoria tritici (strain CBS 115943 / IPO323) (Speckled leaf blotch fungus).